The following is a 320-amino-acid chain: ATP-dependent 6-phosphofructokinase (320 aa).

An ATP-binding site is contributed by Gly-12. An ADP-binding site is contributed by Arg-22–Arg-26. Residues Arg-73 to Phe-74 and Gly-103 to Ser-106 each bind ATP. Residue Asp-104 participates in Mg(2+) binding. Substrate is bound at residue Thr-126 to Asp-128. The active-site Proton acceptor is Asp-128. Arg-155 lines the ADP pocket. Residues Arg-163 and Met-170–Arg-172 each bind substrate. ADP contacts are provided by residues Gly-186–Glu-188, Lys-212, and Lys-214–His-216. Substrate contacts are provided by residues Glu-223, Arg-244, and His-250–Arg-253.

It belongs to the phosphofructokinase type A (PFKA) family. ATP-dependent PFK group I subfamily. Prokaryotic clade 'B1' sub-subfamily. As to quaternary structure, homotetramer. It depends on Mg(2+) as a cofactor.

The protein localises to the cytoplasm. The enzyme catalyses beta-D-fructose 6-phosphate + ATP = beta-D-fructose 1,6-bisphosphate + ADP + H(+). The protein operates within carbohydrate degradation; glycolysis; D-glyceraldehyde 3-phosphate and glycerone phosphate from D-glucose: step 3/4. Allosterically activated by ADP and other diphosphonucleosides, and allosterically inhibited by phosphoenolpyruvate. Functionally, catalyzes the phosphorylation of D-fructose 6-phosphate to fructose 1,6-bisphosphate by ATP, the first committing step of glycolysis. The chain is ATP-dependent 6-phosphofructokinase from Photobacterium profundum (strain SS9).